The chain runs to 1238 residues: Kinesin-related protein 10 (1238 aa).

The 359-residue stretch at 16–374 folds into the Kinesin motor domain; it reads SMIVTVRIRP…LKYAQRAKSI (359 aa). 116 to 123 serves as a coordination point for ATP; sequence GASGAGKT. Residues 417 to 436 show a composition bias toward low complexity; that stretch reads NNNNSNNNNNNNNNNYFSNS. The tract at residues 417–503 is disordered; sequence NNNNSNNNNN…DGEDSNNRDN (87 aa). Polar residues predominate over residues 437–464; the sequence is FGSCGNKNQPIKQPTPPTSLFHQQNQKY. The span at 468–497 shows a compositional bias: acidic residues; that stretch reads DDDDDDDNDQEENNDEVLINEDDEEVDGED. Residues 527–602 adopt a coiled-coil conformation; sequence TLKKTQSIQR…NNQWRRKLQS (76 aa). Low complexity-rich tracts occupy residues 726 to 795, 918 to 934, and 961 to 971; these read NDIN…NIIN, LLPSTTTATTTTLSSPL, and NNNNNNNNIAP. 4 disordered regions span residues 726–802, 891–971, 1134–1156, and 1191–1238; these read NDIN…LKPR, EIDD…NIAP, TPTSTISSSISTRPITTSTTTST, and ATLT…KIIK. The span at 1191–1203 shows a compositional bias: polar residues; that stretch reads ATLTPNRNNSQIV. Residues 1215–1228 are compositionally biased toward low complexity; sequence PTSSSSRLLPSSRT. Over residues 1229-1238 the composition is skewed to polar residues; the sequence is TVNTSRKIIK.

Belongs to the TRAFAC class myosin-kinesin ATPase superfamily. Kinesin family.

It is found in the cytoplasm. It localises to the cytoskeleton. Microtubule-associated force-producing protein that plays a role in organelle transport. Its motor activity is directed toward the microtubule's plus end. Cooperates with kif8 and dynein to organize interphase microtubules. This chain is Kinesin-related protein 10 (kif10), found in Dictyostelium discoideum (Social amoeba).